A 120-amino-acid polypeptide reads, in one-letter code: UPF0231 protein YacL (120 aa).

It belongs to the UPF0231 family.

This is UPF0231 protein YacL from Escherichia fergusonii (strain ATCC 35469 / DSM 13698 / CCUG 18766 / IAM 14443 / JCM 21226 / LMG 7866 / NBRC 102419 / NCTC 12128 / CDC 0568-73).